The sequence spans 283 residues: Phosphatidylglycerol--prolipoprotein diacylglyceryl transferase (283 aa).

3 helical membrane-spanning segments follow: residues 14–34 (LGPL…ALFL), 56–76 (MLMY…VLFY), and 88–108 (IFMV…VLIA). Position 139 (arginine 139) interacts with a 1,2-diacyl-sn-glycero-3-phospho-(1'-sn-glycerol). The helical transmembrane segment at 258–278 (MGQWLSLPMIVIGVALLVFFG) threads the bilayer.

Belongs to the Lgt family.

Its subcellular location is the cell inner membrane. It catalyses the reaction L-cysteinyl-[prolipoprotein] + a 1,2-diacyl-sn-glycero-3-phospho-(1'-sn-glycerol) = an S-1,2-diacyl-sn-glyceryl-L-cysteinyl-[prolipoprotein] + sn-glycerol 1-phosphate + H(+). It functions in the pathway protein modification; lipoprotein biosynthesis (diacylglyceryl transfer). Its function is as follows. Catalyzes the transfer of the diacylglyceryl group from phosphatidylglycerol to the sulfhydryl group of the N-terminal cysteine of a prolipoprotein, the first step in the formation of mature lipoproteins. The chain is Phosphatidylglycerol--prolipoprotein diacylglyceryl transferase from Chromobacterium violaceum (strain ATCC 12472 / DSM 30191 / JCM 1249 / CCUG 213 / NBRC 12614 / NCIMB 9131 / NCTC 9757 / MK).